Here is a 554-residue protein sequence, read N- to C-terminus: Transcription factor 7-like 1-A (554 aa).

The segment covering 1-11 (MPQLNSGGGDE) has biased composition (gly residues). The segment at 1–61 (MPQLNSGGGD…SENHSSDSDS (61 aa)) is interaction with CTNNB1-A. Disordered regions lie at residues 1–73 (MPQL…REAF), 183–213 (GTPPGHLSPEIDPKTGIPRPPHPSELSPYYP), and 391–475 (WSAR…LTTK). 2 stretches are compositionally biased toward basic and acidic residues: residues 17–32 (ELIRFKDEGEQEEKSP) and 52–73 (SENHSSDSDSEVERRPPPREAF). Residues 109-312 (LGGHYLPNGA…SPNLHTKSNM (204 aa)) form an interaction with AES and TLE4-A region. Positions 324-392 (IKKPLNAFML…LHSQLYPSWS (69 aa)) form a DNA-binding region, HMG box. Residues 407 to 416 (KQSPEMETHT) are compositionally biased toward basic and acidic residues. The interval 408–554 (QSPEMETHTK…PLSLVTKSSD (147 aa)) is interaction with CTBP-B. The span at 445-464 (SPATPSAALASPAAPAATHS) shows a compositional bias: low complexity. Residues 465–474 (EQAQPLSLTT) are compositionally biased toward polar residues.

It belongs to the TCF/LEF family. In terms of assembly, interacts with csnk1e, ctnnb1-A, ctbp-B, dact1-A and gsk3b. May interact with ase and tle4-A. In terms of processing, phosphorylated. Phosphorylation by csnk1e promotes binding to ctnnb1-A while phosphorylation by gsk3b may reverse this effect.

The protein localises to the cytoplasm. It localises to the nucleus. Its function is as follows. Participates in the Wnt signaling pathway. Binds to DNA and acts as a repressor in the absence of ctnnb1-A and possibly ctnnb1-B, and as an activator in the presence of these proteins. Required early in development for the establishment of the dorsal body axis in response to maternal Wnt signaling. Also required during development of the CNS for the establishment of dorsal-ventral patterning in the prospective diencephalon. This is Transcription factor 7-like 1-A (tcf7l1-a) from Xenopus laevis (African clawed frog).